A 530-amino-acid chain; its full sequence is Glucose-6-phosphate isomerase (530 aa).

The Proton donor role is filled by Glu-347. Active-site residues include His-378 and Lys-493.

It belongs to the GPI family.

It localises to the cytoplasm. The catalysed reaction is alpha-D-glucose 6-phosphate = beta-D-fructose 6-phosphate. The protein operates within carbohydrate biosynthesis; gluconeogenesis. Its pathway is carbohydrate degradation; glycolysis; D-glyceraldehyde 3-phosphate and glycerone phosphate from D-glucose: step 2/4. Its function is as follows. Catalyzes the reversible isomerization of glucose-6-phosphate to fructose-6-phosphate. The chain is Glucose-6-phosphate isomerase from Chlamydia abortus (strain DSM 27085 / S26/3) (Chlamydophila abortus).